The primary structure comprises 179 residues: Large ribosomal subunit protein uL5 (179 aa).

The protein belongs to the universal ribosomal protein uL5 family. In terms of assembly, part of the 50S ribosomal subunit; part of the 5S rRNA/L5/L18/L25 subcomplex. Contacts the 5S rRNA and the P site tRNA. Forms a bridge to the 30S subunit in the 70S ribosome.

Its function is as follows. This is one of the proteins that bind and probably mediate the attachment of the 5S RNA into the large ribosomal subunit, where it forms part of the central protuberance. In the 70S ribosome it contacts protein S13 of the 30S subunit (bridge B1b), connecting the 2 subunits; this bridge is implicated in subunit movement. Contacts the P site tRNA; the 5S rRNA and some of its associated proteins might help stabilize positioning of ribosome-bound tRNAs. This chain is Large ribosomal subunit protein uL5, found in Oceanobacillus iheyensis (strain DSM 14371 / CIP 107618 / JCM 11309 / KCTC 3954 / HTE831).